The primary structure comprises 1110 residues: Error-prone DNA polymerase (1110 aa).

The segment at 1072–1110 (LGELHEPLNDDRREHPDNPAQRIRHPRDVRILPPSRDFH) is disordered. Basic and acidic residues-rich tracts occupy residues 1073-1088 (GELH…EHPD) and 1097-1110 (PRDV…RDFH).

The protein belongs to the DNA polymerase type-C family. DnaE2 subfamily.

The protein localises to the cytoplasm. The enzyme catalyses DNA(n) + a 2'-deoxyribonucleoside 5'-triphosphate = DNA(n+1) + diphosphate. DNA polymerase involved in damage-induced mutagenesis and translesion synthesis (TLS). It is not the major replicative DNA polymerase. The protein is Error-prone DNA polymerase of Rhodopseudomonas palustris (strain BisB5).